Reading from the N-terminus, the 86-residue chain is Kappa-theraphotoxin-Cg1c (86 aa).

Residues 1–21 form the signal peptide; sequence MKVSVLITLAVLGVMFVWASA. A propeptide spanning residues 22–50 is cleaved from the precursor; it reads AELEERGSDHRDSPAWLKSMERIFQSEER. Disulfide bonds link C52–C66, C59–C71, and C65–C78.

It belongs to the neurotoxin 10 (Hwtx-1) family. 28 (Jztx-11) subfamily. As to expression, expressed by the venom gland.

It is found in the secreted. Probable ion channel inhibitor. This Chilobrachys guangxiensis (Chinese earth tiger tarantula) protein is Kappa-theraphotoxin-Cg1c.